Consider the following 275-residue polypeptide: Formamidopyrimidine-DNA glycosylase (275 aa).

P2 acts as the Schiff-base intermediate with DNA in catalysis. E3 acts as the Proton donor in catalysis. K58 functions as the Proton donor; for beta-elimination activity in the catalytic mechanism. Residues H93, R111, and R156 each coordinate DNA. Residues 241–275 (FVYDRAGQPCRVCGTPIRQIVQGQRSTYYCPTCQR) form an FPG-type zinc finger. R265 acts as the Proton donor; for delta-elimination activity in catalysis.

The protein belongs to the FPG family. As to quaternary structure, monomer. It depends on Zn(2+) as a cofactor.

The enzyme catalyses Hydrolysis of DNA containing ring-opened 7-methylguanine residues, releasing 2,6-diamino-4-hydroxy-5-(N-methyl)formamidopyrimidine.. The catalysed reaction is 2'-deoxyribonucleotide-(2'-deoxyribose 5'-phosphate)-2'-deoxyribonucleotide-DNA = a 3'-end 2'-deoxyribonucleotide-(2,3-dehydro-2,3-deoxyribose 5'-phosphate)-DNA + a 5'-end 5'-phospho-2'-deoxyribonucleoside-DNA + H(+). Its function is as follows. Involved in base excision repair of DNA damaged by oxidation or by mutagenic agents. Acts as a DNA glycosylase that recognizes and removes damaged bases. Has a preference for oxidized purines, such as 7,8-dihydro-8-oxoguanine (8-oxoG). Has AP (apurinic/apyrimidinic) lyase activity and introduces nicks in the DNA strand. Cleaves the DNA backbone by beta-delta elimination to generate a single-strand break at the site of the removed base with both 3'- and 5'-phosphates. The sequence is that of Formamidopyrimidine-DNA glycosylase from Burkholderia cenocepacia (strain ATCC BAA-245 / DSM 16553 / LMG 16656 / NCTC 13227 / J2315 / CF5610) (Burkholderia cepacia (strain J2315)).